The sequence spans 148 residues: Large ribosomal subunit protein uL15 (148 aa).

The tract at residues 1–51 is disordered; that stretch reads MNLSSLKPAEGAVKSRKRIGRGPGSGLGGTSTRGHKGAKSRSGYSKKIGFE. The span at 21 to 31 shows a compositional bias: gly residues; sequence RGPGSGLGGTS.

This sequence belongs to the universal ribosomal protein uL15 family. In terms of assembly, part of the 50S ribosomal subunit.

In terms of biological role, binds to the 23S rRNA. The polypeptide is Large ribosomal subunit protein uL15 (Porphyromonas gingivalis (strain ATCC 33277 / DSM 20709 / CIP 103683 / JCM 12257 / NCTC 11834 / 2561)).